The sequence spans 122 residues: UPF0145 protein BamMC406_5002 (122 aa).

It belongs to the UPF0145 family.

The polypeptide is UPF0145 protein BamMC406_5002 (Burkholderia ambifaria (strain MC40-6)).